Consider the following 424-residue polypeptide: Cuticlin-1 (424 aa).

A signal peptide spans 1–18 (MTWKPIICLAALVLSASA). The Extracellular segment spans residues 19–392 (IPVDNNVEGE…ATSTGICLTP (374 aa)). The ZP domain occupies 32–277 (ECGPNSITVN…PTCSEPQGFG (246 aa)). Cys197 and Cys252 are joined by a disulfide. 4 tandem repeats follow at residues 302-305 (AAPV), 307-311 (AAAPV), 312-315 (AAPV), and 320-323 (AAPA). Residues 302 to 323 (AAPVAAAAPVAAPVAAAAAAPA) form a 4 X 4 AA repeats of A-A-P-[AVI] region. A helical transmembrane segment spans residues 393 to 413 (IGFASFLGIGTIVATALSATI). Over 414–424 (FYVARPTSHKH) the chain is Cytoplasmic.

It is found in the cell membrane. Its subcellular location is the secreted. Functionally, component of the cuticles, which contributes to the formation of extracellular envelopes protecting the organism from the environment. Plays a role in alae formation in dauer larvae. The sequence is that of Cuticlin-1 from Caenorhabditis elegans.